A 222-amino-acid chain; its full sequence is Beta-amylase (222 aa).

Residue Thr-36 participates in substrate binding. Residue Glu-74 is the Proton acceptor of the active site. Substrate is bound by residues 75 to 76 and Arg-114; that span reads NA.

Belongs to the glycosyl hydrolase 14 family.

It catalyses the reaction Hydrolysis of (1-&gt;4)-alpha-D-glucosidic linkages in polysaccharides so as to remove successive maltose units from the non-reducing ends of the chains.. This chain is Beta-amylase (BMY1), found in Secale cereale (Rye).